We begin with the raw amino-acid sequence, 112 residues long: Nitrogen regulatory protein P-II (112 aa).

Tyr51 carries the O-UMP-tyrosine modification.

This sequence belongs to the P(II) protein family. In terms of assembly, homotrimer.

Its subcellular location is the plastid. It is found in the chloroplast. In terms of biological role, P-II indirectly controls the transcription of the glutamine synthetase gene (glnA). P-II prevents NR-II-catalyzed conversion of NR-I to NR-I-phosphate, the transcriptional activator of glnA. When P-II is uridylylated to P-II-UMP, these events are reversed. When the ratio of Gln to 2-ketoglutarate decreases, P-II is uridylylated to P-II-UMP, which causes the deadenylation of glutamine synthetase, so activating the enzyme. The chain is Nitrogen regulatory protein P-II (glnB) from Pyropia yezoensis (Susabi-nori).